Consider the following 111-residue polypeptide: Large ribosomal subunit protein P1 (111 aa).

Residues 75–111 (AAAPAAEEKAEEEKKEEEEEKKEEEVDLSGLSGMFGF) are disordered. Acidic residues predominate over residues 88 to 101 (KKEEEEEKKEEEVD).

The protein belongs to the eukaryotic ribosomal protein P1/P2 family. Part of the 50S ribosomal subunit. Homodimer, it forms part of the ribosomal stalk which helps the ribosome interact with GTP-bound translation factors. Forms a heptameric uL10/P0(P1)2(P1)2(P1)2 complex, where uL10/P0 forms an elongated spine to which the P1 dimers bind in a sequential fashion.

In terms of biological role, forms part of the ribosomal stalk, playing a central role in the interaction of the ribosome with GTP-bound translation factors. In Aeropyrum pernix (strain ATCC 700893 / DSM 11879 / JCM 9820 / NBRC 100138 / K1), this protein is Large ribosomal subunit protein P1.